The primary structure comprises 92 residues: Putative defensin-like protein 251 (92 aa).

An N-terminal signal peptide occupies residues 1–27 (MRCVTSFVVFCILMFFVLNIFTVEVKA). Intrachain disulfides connect Cys34-Cys90, Cys45-Cys69, Cys53-Cys82, and Cys67-Cys84.

This sequence belongs to the DEFL family.

It is found in the secreted. The sequence is that of Putative defensin-like protein 251 (SCRL12) from Arabidopsis thaliana (Mouse-ear cress).